Reading from the N-terminus, the 176-residue chain is Membrane glycoprotein UL144 (176 aa).

The first 20 residues, 1–20 (MKPLIMLICFAVILLQLGVT), serve as a signal peptide directing secretion. TNFR-Cys repeat units follow at residues 22-56 (VCQH…SVTC) and 58-95 (PCPN…NTVC). Intrachain disulfides connect cysteine 23–cysteine 34, cysteine 35–cysteine 48, cysteine 38–cysteine 56, cysteine 59–cysteine 71, cysteine 74–cysteine 87, and cysteine 77–cysteine 95. The chain crosses the membrane as a helical span at residues 134 to 154 (LAWLSLFIFLVGIILLILYLI).

As to quaternary structure, interacts with host TRIM23; this interaction causes auto-ubiquitination of TRAF6, leading to NF-kappaB activation.

It is found in the membrane. Functionally, activates NF-kappaB in a tumor necrosis factor receptor (TNFR)-associated factor 6 (TRAF6)-dependent manner, causing the up-regulation of the chemokine CCL22. The protein is Membrane glycoprotein UL144 (UL144) of Homo sapiens (Human).